The sequence spans 94 residues: Co-chaperonin GroES (94 aa).

Belongs to the GroES chaperonin family. As to quaternary structure, heptamer of 7 subunits arranged in a ring. Interacts with the chaperonin GroEL.

It is found in the cytoplasm. Its function is as follows. Together with the chaperonin GroEL, plays an essential role in assisting protein folding. The GroEL-GroES system forms a nano-cage that allows encapsulation of the non-native substrate proteins and provides a physical environment optimized to promote and accelerate protein folding. GroES binds to the apical surface of the GroEL ring, thereby capping the opening of the GroEL channel. This is Co-chaperonin GroES from Lactococcus lactis subsp. cremoris (strain MG1363).